The following is a 404-amino-acid chain: Cysteine desulfurase IscS (404 aa).

Pyridoxal 5'-phosphate contacts are provided by residues 75 to 76 (AT), Asn-155, Gln-183, and 203 to 205 (SAH). At Lys-206 the chain carries N6-(pyridoxal phosphate)lysine. Residue Thr-243 coordinates pyridoxal 5'-phosphate. Cys-328 serves as the catalytic Cysteine persulfide intermediate. Cys-328 serves as a coordination point for [2Fe-2S] cluster.

The protein belongs to the class-V pyridoxal-phosphate-dependent aminotransferase family. NifS/IscS subfamily. As to quaternary structure, homodimer. Forms a heterotetramer with IscU, interacts with other sulfur acceptors. Requires pyridoxal 5'-phosphate as cofactor.

Its subcellular location is the cytoplasm. The enzyme catalyses (sulfur carrier)-H + L-cysteine = (sulfur carrier)-SH + L-alanine. It participates in cofactor biosynthesis; iron-sulfur cluster biosynthesis. Master enzyme that delivers sulfur to a number of partners involved in Fe-S cluster assembly, tRNA modification or cofactor biosynthesis. Catalyzes the removal of elemental sulfur atoms from cysteine to produce alanine. Functions as a sulfur delivery protein for Fe-S cluster synthesis onto IscU, an Fe-S scaffold assembly protein, as well as other S acceptor proteins. This chain is Cysteine desulfurase IscS, found in Pseudomonas putida (strain W619).